A 599-amino-acid chain; its full sequence is Serine/threonine-protein kinase Nek1 (599 aa).

Residues 4-258 (YEVLEQIGKG…AAELLKHPHL (255 aa)) enclose the Protein kinase domain. Residues 10-18 (IGKGAFGSA) and Lys-33 contribute to the ATP site. Asp-129 functions as the Proton acceptor in the catalytic mechanism. Disordered stretches follow at residues 364–386 (SIVKTPKRTPSKTITTPQLEPPK), 461–482 (SEDPPFLKLHGRRSPTPTPQHC), and 504–542 (DDDDGRSDSSSGRNNAAAAASSRAGSSESTRQRRFDTSS). The span at 511-530 (DSSSGRNNAAAAASSRAGSS) shows a compositional bias: low complexity.

It belongs to the protein kinase superfamily. NEK Ser/Thr protein kinase family. NIMA subfamily. In terms of tissue distribution, expressed in anthers, pistils and leaves.

It carries out the reaction L-seryl-[protein] + ATP = O-phospho-L-seryl-[protein] + ADP + H(+). The enzyme catalyses L-threonyl-[protein] + ATP = O-phospho-L-threonyl-[protein] + ADP + H(+). Its function is as follows. May be involved in plant development processes. This Oryza sativa subsp. japonica (Rice) protein is Serine/threonine-protein kinase Nek1.